A 95-amino-acid polypeptide reads, in one-letter code: Large ribosomal subunit protein bL21 (95 aa).

This sequence belongs to the bacterial ribosomal protein bL21 family. In terms of assembly, part of the 50S ribosomal subunit. Contacts protein L20.

Functionally, this protein binds to 23S rRNA in the presence of protein L20. The chain is Large ribosomal subunit protein bL21 from Rubrobacter xylanophilus (strain DSM 9941 / JCM 11954 / NBRC 16129 / PRD-1).